We begin with the raw amino-acid sequence, 316 residues long: uncharacterized protein (316 aa).

BNR repeat units follow at residues 62 to 73 (FISDSQGLKFSP), 124 to 135 (KISVDNGLTWSN), 196 to 207 (FISRDGGLTWRV), and 242 to 253 (YFSLDQGRTWNQ).

This is an uncharacterized protein from Saccharomyces cerevisiae (strain ATCC 204508 / S288c) (Baker's yeast).